The sequence spans 534 residues: Serine/threonine-protein phosphatase 2B catalytic subunit (534 aa).

Fe cation-binding residues include aspartate 88, histidine 90, and aspartate 116. 2 residues coordinate Zn(2+): aspartate 116 and asparagine 148. Histidine 149 (proton donor) is an active-site residue. 2 residues coordinate Zn(2+): histidine 197 and histidine 279. Disordered regions lie at residues 375 to 398 and 475 to 534; these read LEDETPTSVSPSAPSPPLPMDVES and PSHE…TREA. Composition is skewed to basic and acidic residues over residues 475–497 and 524–534; these read PSHEEVIKRSEEERRAALERAQQ and QRDAARETREA.

This sequence belongs to the PPP phosphatase family. PP-2B subfamily. As to quaternary structure, composed of two components (A and B), the A component is the catalytic subunit and the B component confers calcium sensitivity. It depends on Fe(3+) as a cofactor. Zn(2+) serves as cofactor.

The enzyme catalyses O-phospho-L-seryl-[protein] + H2O = L-seryl-[protein] + phosphate. It catalyses the reaction O-phospho-L-threonyl-[protein] + H2O = L-threonyl-[protein] + phosphate. In terms of biological role, calcium-dependent, calmodulin-stimulated protein phosphatase. This subunit may have a role in the calmodulin activation of calcineurin. In Aspergillus fumigatus (strain ATCC MYA-4609 / CBS 101355 / FGSC A1100 / Af293) (Neosartorya fumigata), this protein is Serine/threonine-protein phosphatase 2B catalytic subunit (cnaA).